Reading from the N-terminus, the 126-residue chain is Cell cycle protein GpsB (126 aa).

A coiled-coil region spans residues 35 to 72 (LDLVIKDYQTYQENIDRLTADNTRLFNKVEELNRQLSA).

It belongs to the GpsB family. As to quaternary structure, forms polymers through the coiled coil domains. Interacts with PBP1, MreC and EzrA.

It localises to the cytoplasm. Its function is as follows. Divisome component that associates with the complex late in its assembly, after the Z-ring is formed, and is dependent on DivIC and PBP2B for its recruitment to the divisome. Together with EzrA, is a key component of the system that regulates PBP1 localization during cell cycle progression. Its main role could be the removal of PBP1 from the cell pole after pole maturation is completed. Also contributes to the recruitment of PBP1 to the division complex. Not essential for septum formation. This chain is Cell cycle protein GpsB, found in Latilactobacillus sakei subsp. sakei (strain 23K) (Lactobacillus sakei subsp. sakei).